The primary structure comprises 639 residues: 1-deoxy-D-xylulose-5-phosphate synthase (639 aa).

Residues His79 and 120–122 each bind thiamine diphosphate; that span reads GHS. Asp151 is a Mg(2+) binding site. Thiamine diphosphate contacts are provided by residues 152–153, Asn180, Tyr288, and Glu370; that span reads GG. Residue Asn180 coordinates Mg(2+).

It belongs to the transketolase family. DXPS subfamily. Homodimer. Mg(2+) serves as cofactor. It depends on thiamine diphosphate as a cofactor.

It carries out the reaction D-glyceraldehyde 3-phosphate + pyruvate + H(+) = 1-deoxy-D-xylulose 5-phosphate + CO2. The protein operates within metabolic intermediate biosynthesis; 1-deoxy-D-xylulose 5-phosphate biosynthesis; 1-deoxy-D-xylulose 5-phosphate from D-glyceraldehyde 3-phosphate and pyruvate: step 1/1. In terms of biological role, catalyzes the acyloin condensation reaction between C atoms 2 and 3 of pyruvate and glyceraldehyde 3-phosphate to yield 1-deoxy-D-xylulose-5-phosphate (DXP). The sequence is that of 1-deoxy-D-xylulose-5-phosphate synthase from Methylococcus capsulatus (strain ATCC 33009 / NCIMB 11132 / Bath).